The chain runs to 248 residues: Clathrin light chain A (248 aa).

Residues 1–92 (MAELDPFGAP…YYQESNGPTD (92 aa)) form a disordered region. Gly residues predominate over residues 13–25 (APGGPALGNGVAG). Residues 61–71 (GPQPHGEPPGG) show a composition bias toward pro residues. The interval 100–162 (VDRLQSEPES…QLQKTKANNR (63 aa)) is involved in binding clathrin heavy chain. 2 positions are modified to phosphoserine: serine 105 and serine 206. Lysine 223 carries the N6-acetyllysine modification. Residue serine 236 is modified to Phosphoserine. At lysine 242 the chain carries N6-acetyllysine.

The protein belongs to the clathrin light chain family. In terms of assembly, clathrin coats are formed from molecules containing 3 heavy chains and 3 light chains. Interacts with CALY; the interaction stimulates clathrin self-assembly and clathrin-mediated endocytosis. Interacts with CKAP5 and TACC3 forming the TACC3/ch-TOG/clathrin complex located at spindle inter-microtubules bridges; the complex implicates clathrin triskelions.

Its subcellular location is the cytoplasmic vesicle membrane. It localises to the membrane. The protein resides in the coated pit. It is found in the cytoplasm. The protein localises to the cytoskeleton. Its subcellular location is the spindle. Functionally, clathrin is the major protein of the polyhedral coat of coated pits and vesicles. Acts as a component of the TACC3/ch-TOG/clathrin complex proposed to contribute to stabilization of kinetochore fibers of the mitotic spindle by acting as inter-microtubule bridge. This Homo sapiens (Human) protein is Clathrin light chain A (CLTA).